We begin with the raw amino-acid sequence, 375 residues long: Formate dehydrogenase (375 aa).

Substrate contacts are provided by Ile94 and Asn120. NAD(+) contacts are provided by residues 175–176 (RI), Asp196, 231–235 (PLHEK), Thr257, Asp283, 312–315 (HMSG), and Ser358.

It belongs to the D-isomer specific 2-hydroxyacid dehydrogenase family. FDH subfamily. In terms of assembly, homodimer.

It localises to the cytoplasm. The catalysed reaction is formate + NAD(+) = CO2 + NADH. Its function is as follows. Catalyzes the NAD(+)-dependent oxidation of formate to carbon dioxide. Formate oxidation is the final step in the methanol oxidation pathway in methylotrophic microorganisms. Has a role in the detoxification of exogenous formate in non-methylotrophic organisms. The chain is Formate dehydrogenase from Neurospora crassa (strain ATCC 24698 / 74-OR23-1A / CBS 708.71 / DSM 1257 / FGSC 987).